A 1594-amino-acid chain; its full sequence is Transcription factor Gibbin (1594 aa).

Disordered stretches follow at residues 19-111 (PDYL…RHWD), 149-241 (LRLS…LADA), 256-307 (QLLE…DPLG), and 367-464 (CSPH…RKGK). Positions 30–47 (GGPPTPRPLLPTRPPASP) are enriched in pro residues. An N6-acetyllysine modification is found at K79. Residues 165–177 (SFFSSPSLANSIR) show a composition bias toward polar residues. Residues 178–193 (SPEERANPHTKSERPS) are compositionally biased toward basic and acidic residues. Over residues 228 to 240 (PEPDGPDYSELAD) the composition is skewed to acidic residues. A Phosphoserine modification is found at S267. Positions 272-303 (PQLLDPQPRFLDPQALEPLGEGLELPPLQPLA) are enriched in low complexity. Residues 391 to 401 (ILCRRRKAGRG) are compositionally biased toward basic residues. Residues 395-407 (RRKAGRGRKADSG) constitute a DNA-binding region (a.T hook 1). The span at 427–447 (EPPPLPPPPPPTLSGPGPVPE) shows a compositional bias: pro residues. The a.T hook 2 DNA-binding region spans 541-553 (KRKRGRPPKNLLL). Positions 578-604 (MPEVKKRRRRKQKLASPQPSYAADAND) are disordered. At S593 the chain carries Phosphoserine. K606 participates in a covalent cross-link: Glycyl lysine isopeptide (Lys-Gly) (interchain with G-Cter in SUMO2). The disordered stretch occupies residues 714–789 (LTELGHPRKR…PGGQAGRNCG (76 aa)). Over residues 734–743 (KPKRKRRSRK) the composition is skewed to basic residues. Phosphoserine is present on residues S825 and S842. An Omega-N-methylarginine modification is found at R887. At S892 the chain carries Phosphoserine. The disordered stretch occupies residues 942-967 (KLAPPPSAVARSPTTHPPANTYPPQY). S1060 bears the Phosphoserine mark. Disordered regions lie at residues 1152-1191 (VSETFSESSSDSTQFSQPVGGGGFRRANSEASSSEGQSSL) and 1245-1306 (STSA…PDLG). 3 stretches are compositionally biased toward low complexity: residues 1153–1168 (SETFSESSSDSTQFSQ), 1180–1191 (SEASSSEGQSSL), and 1245–1264 (STSATASGYPSKRSTGPRQP). Residue S1180 is modified to Phosphoserine. S1315, S1317, and S1392 each carry phosphoserine. T1394 is subject to Phosphothreonine. Phosphoserine is present on S1396. A Glycyl lysine isopeptide (Lys-Gly) (interchain with G-Cter in SUMO2) cross-link involves residue K1402. The disordered stretch occupies residues 1495 to 1525 (HLASPPATPKADKEPLEMARPPGPPRGPAAA). S1498 and S1540 each carry phosphoserine.

Its subcellular location is the nucleus. It is found in the chromosome. Transcription factor required for the proper patterning of the epidermis, which plays a key role in early epithelial morphogenesis. Directly binds promoter and enhancer regions and acts by maintaining local enhancer-promoter chromatin architecture. Interacts with many sequence-specific zinc-finger transcription factors and methyl-CpG-binding proteins to regulate the expression of mesoderm genes that wire surface ectoderm stratification. This Mus musculus (Mouse) protein is Transcription factor Gibbin.